The following is a 192-amino-acid chain: Mitochondrial import inner membrane translocase subunit TIM18 (192 aa).

The N-terminal 42 residues, 1-42 (MLLFPGLKPVLNASTVIVNPVRAVFPGLVLSTKRSFYSINRL), are a transit peptide targeting the mitochondrion. Residues 43-88 (NAENKINDIANTSKEASSSVQMFKPPEFSQFKDSYQKDYERIAKYT) lie on the Mitochondrial matrix side of the membrane. Residues 89-109 (LIPLTMVPFYASFTGGVINPL) form a helical membrane-spanning segment. Topologically, residues 110–113 (LDAS) are mitochondrial intermembrane. Residues 114–134 (LSSIFLIYLQYGFTSCIIDYI) form a helical membrane-spanning segment. Topologically, residues 135-144 (PKEKYPRWHK) are mitochondrial matrix. The helical transmembrane segment at 145-165 (LALYCLYGGSMLSLYGIYELE) threads the bilayer. Residues 166–192 (TKNNGFVDLVKKLWNENDDHLYIFGRN) are Mitochondrial intermembrane-facing.

This sequence belongs to the CybS family. In terms of assembly, component of the TIM22 complex, whose core is composed of TIM18, TIM22 and TIM54, associated with the peripheral proteins MRS5/TIM12 and the 70 kDa heterohexamer composed of TIM9 and TIM10 (or TIM8 and TIM13).

The protein localises to the mitochondrion inner membrane. Component of the TIM22 complex, a complex that mediates the import and insertion of multi-pass transmembrane proteins into the mitochondrial inner membrane. The TIM22 complex forms a twin-pore translocase that uses the membrane potential as external driving force. Its role in the complex is unclear but it may be involved in the assembly and stabilization of the TIM22 complex. The protein is Mitochondrial import inner membrane translocase subunit TIM18 (TIM18) of Saccharomyces cerevisiae (strain ATCC 204508 / S288c) (Baker's yeast).